The sequence spans 544 residues: Glucans biosynthesis protein G (544 aa).

The N-terminal stretch at 1–34 (MVSLLRCQSSKPYSSLICSLALGVAFALSGTAYA) is a signal peptide.

Belongs to the OpgD/OpgG family.

It is found in the periplasm. It participates in glycan metabolism; osmoregulated periplasmic glucan (OPG) biosynthesis. Involved in the biosynthesis of osmoregulated periplasmic glucans (OPGs). The polypeptide is Glucans biosynthesis protein G (Shewanella putrefaciens (strain CN-32 / ATCC BAA-453)).